The chain runs to 399 residues: Tryptophan synthase beta chain (399 aa).

The residue at position 92 (lysine 92) is an N6-(pyridoxal phosphate)lysine.

This sequence belongs to the TrpB family. As to quaternary structure, tetramer of two alpha and two beta chains. It depends on pyridoxal 5'-phosphate as a cofactor.

It carries out the reaction (1S,2R)-1-C-(indol-3-yl)glycerol 3-phosphate + L-serine = D-glyceraldehyde 3-phosphate + L-tryptophan + H2O. Its pathway is amino-acid biosynthesis; L-tryptophan biosynthesis; L-tryptophan from chorismate: step 5/5. In terms of biological role, the beta subunit is responsible for the synthesis of L-tryptophan from indole and L-serine. The chain is Tryptophan synthase beta chain from Legionella pneumophila (strain Corby).